Here is a 491-residue protein sequence, read N- to C-terminus: Keratin, type II microfibrillar, component 7C (491 aa).

C1 carries the post-translational modification Blocked amino end (Cys). The segment at 1-109 (CGFSTVGSGF…PNAQCVKQEE (109 aa)) is head. The region spanning 109 to 420 (EKEQIKCLNN…RLLEGEEQRL (312 aa)) is the IF rod domain. The interval 110 to 144 (KEQIKCLNNRFAAFIDKVRFLEQQNKLLETKLQFF) is coil 1A. A linker 1 region spans residues 145–154 (QNRQCCESNL). The coil 1B stretch occupies residues 155 to 255 (EPLFEGYIET…YQEEIRVLQA (101 aa)). The interval 256-272 (NISDTSVIVKMDNSRDL) is linker 12. The tract at residues 273-416 (NMDCIVAEIK…ATYRRLLEGE (144 aa)) is coil 2. The interval 417 to 491 (EQRLCEGVGA…GGGSCSLGRC (75 aa)) is tail.

Belongs to the intermediate filament family.

In terms of biological role, wool microfibrillar keratin. This chain is Keratin, type II microfibrillar, component 7C, found in Ovis aries (Sheep).